A 104-amino-acid chain; its full sequence is Large ribosomal subunit protein bL21 (104 aa).

It belongs to the bacterial ribosomal protein bL21 family. As to quaternary structure, part of the 50S ribosomal subunit. Contacts protein L20.

This protein binds to 23S rRNA in the presence of protein L20. The sequence is that of Large ribosomal subunit protein bL21 from Allorhizobium ampelinum (strain ATCC BAA-846 / DSM 112012 / S4) (Agrobacterium vitis (strain S4)).